A 231-amino-acid chain; its full sequence is MLTKKQLDLLEFIHKRLQADGVPPSFDEMKLALDLRSKSGIHRLITALEERGFIRRLAHRARAIEIVKLPESLGGEPTVGFQPRVIDGDRPDRPRPANAEPVTIHAVELPVMGRIAAGVPIEAISQVSHQVAVPGSMVGKGEHYALEVKGDSMIEAGINDGDVVVIRETSTADNGDIVVALVDDSEATLKRFFRRGASIALEAANPAYETRVLPSDRVRVQGRLVGLIRTY.

The segment at residues 26-46 is a DNA-binding region (H-T-H motif); it reads FDEMKLALDLRSKSGIHRLIT. Residues 79–98 are disordered; that stretch reads VGFQPRVIDGDRPDRPRPAN. Residues 86–95 show a composition bias toward basic and acidic residues; it reads IDGDRPDRPR. Residues Ser-152 and Lys-190 each act as for autocatalytic cleavage activity in the active site.

Belongs to the peptidase S24 family. In terms of assembly, homodimer.

It catalyses the reaction Hydrolysis of Ala-|-Gly bond in repressor LexA.. In terms of biological role, represses a number of genes involved in the response to DNA damage (SOS response), including recA and lexA. In the presence of single-stranded DNA, RecA interacts with LexA causing an autocatalytic cleavage which disrupts the DNA-binding part of LexA, leading to derepression of the SOS regulon and eventually DNA repair. This Ruegeria pomeroyi (strain ATCC 700808 / DSM 15171 / DSS-3) (Silicibacter pomeroyi) protein is LexA repressor.